The chain runs to 123 residues: Cliotide T4 (123 aa).

A signal peptide spans 1–28; that stretch reads MASLRIAPLALFFFLAASVMFTVEKTEA. The cyclopeptide (Gly-Asn) cross-link spans 29–58; it reads GIPCGESCVFIPCITAAIGCSCKSKVCYRN. 3 cysteine pairs are disulfide-bonded: C32–C48, C36–C50, and C41–C55. A propeptide spans 59–123 (removed in mature form); the sequence is HVIAAEAKTM…KDHLKMSITN (65 aa).

Post-translationally, contains 3 disulfide bonds. This is a cyclic peptide. In terms of tissue distribution, expressed in flower, stem, shoot, root, leaf, seed, pod and nodule (at protein level).

In terms of biological role, probably participates in a plant defense mechanism. Active against Gram-negative bacteria E.coli ATCC 700926 (MIC=1.0 uM), K.pneumoniae ATTC 13883 (MIC=5.5 uM) and P.aeruginosa ATCC 39018 (MIC=7.5 uM). Has hemolytic and cytotoxic activity. This Clitoria ternatea (Butterfly pea) protein is Cliotide T4.